The chain runs to 82 residues: Protein ImpC (82 aa).

It belongs to the DinI family.

In terms of biological role, the imp operon is involved in UV protection and mutation, however the ImpC protein is not essential for these functions. The protein is Protein ImpC (impC) of Salmonella typhimurium.